The primary structure comprises 294 residues: 2-oxoglutaramate amidase (294 aa).

In terms of domain architecture, CN hydrolase spans 16–261 (LDVAAVQVKF…EAVLRATLNF (246 aa)). Catalysis depends on Glu-55, which acts as the Proton acceptor. The active-site Proton donor is Lys-129. The active-site Nucleophile is the Cys-168.

The protein belongs to the carbon-nitrogen hydrolase superfamily. NIT1/NIT2 family.

It catalyses the reaction 2-oxoglutaramate + H2O = 2-oxoglutarate + NH4(+). It participates in alkaloid degradation; nicotine degradation. In terms of biological role, catalyzes the conversion of 2-oxoglutaramate to 2-oxoglutarate. Together with glutamate dehydrogenase, may form a physiologically relevant enzyme couple, leading to transformation of metabolically inert 2-oxoglutaramate derived from trihydroxypyridine into glutamate, a central compound of nitrogen metabolism. The chain is 2-oxoglutaramate amidase from Paenarthrobacter nicotinovorans (Arthrobacter nicotinovorans).